A 248-amino-acid polypeptide reads, in one-letter code: tRNA (guanine-N(7)-)-methyltransferase (248 aa).

Positions 80, 105, 132, and 155 each coordinate S-adenosyl-L-methionine. The active site involves Asp-155. Residues Lys-159, Asp-191, and 223-226 (TKFE) each bind substrate.

The protein belongs to the class I-like SAM-binding methyltransferase superfamily. TrmB family.

It carries out the reaction guanosine(46) in tRNA + S-adenosyl-L-methionine = N(7)-methylguanosine(46) in tRNA + S-adenosyl-L-homocysteine. It functions in the pathway tRNA modification; N(7)-methylguanine-tRNA biosynthesis. Catalyzes the formation of N(7)-methylguanine at position 46 (m7G46) in tRNA. The polypeptide is tRNA (guanine-N(7)-)-methyltransferase (Nocardioides sp. (strain ATCC BAA-499 / JS614)).